The sequence spans 29 residues: Galanin (29 aa).

An Alanine amide modification is found at alanine 29.

This sequence belongs to the galanin family.

The protein resides in the secreted. Functionally, contracts smooth muscle of the gastrointestinal and genitourinary tract, regulates growth hormone release, modulates insulin release, and may be involved in the control of adrenal secretion. This is Galanin (gal) from Pelophylax ridibundus (Marsh frog).